A 443-amino-acid polypeptide reads, in one-letter code: Xaa-Pro dipeptidase (443 aa).

The Mn(2+) site is built by Asp246, Asp257, His339, Glu384, and Glu423.

It belongs to the peptidase M24B family. Bacterial-type prolidase subfamily. Mn(2+) is required as a cofactor.

It catalyses the reaction Xaa-L-Pro dipeptide + H2O = an L-alpha-amino acid + L-proline. In terms of biological role, splits dipeptides with a prolyl residue in the C-terminal position. This Enterobacter sp. (strain 638) protein is Xaa-Pro dipeptidase.